The sequence spans 110 residues: UPF0122 protein lwe1821 (110 aa).

It belongs to the UPF0122 family.

Might take part in the signal recognition particle (SRP) pathway. This is inferred from the conservation of its genetic proximity to ftsY/ffh. May be a regulatory protein. This Listeria welshimeri serovar 6b (strain ATCC 35897 / DSM 20650 / CCUG 15529 / CIP 8149 / NCTC 11857 / SLCC 5334 / V8) protein is UPF0122 protein lwe1821.